We begin with the raw amino-acid sequence, 2684 residues long: Probable polyketide synthase 27 (2684 aa).

The region spanning 11–442 is the Ketosynthase family 3 (KS3) domain; that stretch reads CGDVAIIGIG…GSNVCLILSE (432 aa). Residues C183, H322, and H365 each act as for beta-ketoacyl synthase activity in the active site. The interval 650 to 683 is acyl/malonyl transferases; the sequence is GVSADIIVGHSLGEMSSSYSSGMIDFETLCYLIY. S660 functions as the For acyl/malonyl transferase activity in the catalytic mechanism. Residues 958 to 1087 are N-terminal hotdog fold; the sequence is HEKITSEGPP…GNFSLFKHNS (130 aa). A PKS/mFAS DH domain is found at 958-1276; sequence HEKITSEGPP…CTSVSLVNPR (319 aa). Residue H999 is the Proton acceptor; for dehydratase activity of the active site. The tract at residues 1104 to 1276 is C-terminal hotdog fold; the sequence is NFTTISKQEF…CTSVSLVNPR (173 aa). Catalysis depends on D1173, which acts as the Proton donor; for dehydratase activity. The tract at residues 1202–1221 is disordered; sequence IPSSSSSSKDDNDCDSNNNN. Residues 2585–2662 enclose the Carrier domain; sequence SDNEFIHSTI…QSIDIIKFGY (78 aa). S2622 carries the post-translational modification O-(pantetheine 4'-phosphoryl)serine.

Pantetheine 4'-phosphate is required as a cofactor.

In terms of biological role, probable polyketide synthase. This Dictyostelium discoideum (Social amoeba) protein is Probable polyketide synthase 27 (pks27).